We begin with the raw amino-acid sequence, 214 residues long: Ribosomal RNA small subunit methyltransferase G (214 aa).

Residues G77, F82, 128–129 (VE), and R143 each bind S-adenosyl-L-methionine.

It belongs to the methyltransferase superfamily. RNA methyltransferase RsmG family.

The protein resides in the cytoplasm. It catalyses the reaction guanosine(527) in 16S rRNA + S-adenosyl-L-methionine = N(7)-methylguanosine(527) in 16S rRNA + S-adenosyl-L-homocysteine. In terms of biological role, specifically methylates the N7 position of guanine in position 527 of 16S rRNA. In Nitrosomonas europaea (strain ATCC 19718 / CIP 103999 / KCTC 2705 / NBRC 14298), this protein is Ribosomal RNA small subunit methyltransferase G.